A 100-amino-acid chain; its full sequence is UPF0213 protein YhbQ (100 aa).

A GIY-YIG domain is found at 2-77; it reads TPWFLYLIRT…KQLTKRQKER (76 aa).

The protein belongs to the UPF0213 family.

The polypeptide is UPF0213 protein YhbQ (Escherichia coli O7:K1 (strain IAI39 / ExPEC)).